The chain runs to 546 residues: MNHSEVKTGLIVTAKQTYYPIELSNAELLTHYETIQEYHEEISQNVLVQSSKTKPDIKLIDQQPEMNPHQTREAIVTFLYQLSVMTRVSNGIFFHAVRFYDRYCSKRVVLKDQAKLVVGTCLWLAAKTWGGCNHIINNVSIPTGGRFYGPNPRARIPRLSELVHYCGGSDLFDESMFIQMERHILDTLNWDVYEPMINDYILNVDENCLIQYELYKNQLQNNNSNGKEWSCKRKSQSSDDSDATVEEHISSSPQSTGLDGDTTTMDEDEELNSKIKLINLKRFLIDLSCWQYNLLKFELYEICNGMFSIINKFTNQDQGPFLSMPIGNDINSNTQTQVFSIIINGIVNSPPSLVEVYKEQYGIVPFILQVKDYNLELQKKLQLASTIDLTRKIAVNSRYFDQNASSSSVSSPSTYSSGTNYTPMRNFSAQSDNSVFSTTNIDHSSPITPHMYTFNQFKNESACDSAISVSSLPNQTQNGNMPLSSNYQNMMLEERNKENRIPNSSSAEIPQRAKFMTTGIFQNTGELTNRASSISLSLRNHNSSQL.

Residues 224-265 are disordered; the sequence is SNGKEWSCKRKSQSSDDSDATVEEHISSSPQSTGLDGDTTTM.

Belongs to the cyclin family.

In terms of biological role, essential for the control of the cell cycle at the G1/S (start) transition. Interacts with the CDC28 protein kinase to form MPF. In Saccharomyces cerevisiae (strain ATCC 204508 / S288c) (Baker's yeast), this protein is G1/S-specific cyclin CLN1 (CLN1).